Consider the following 541-residue polypeptide: CRISPR-associated exonuclease Cas4/endonuclease Cas1 fusion (541 aa).

The tract at residues 1–179 (MGIHSLLYCE…NCSLAPVCLP (179 aa)) is CRISPR-associated exonuclease Cas4. C9 provides a ligand contact to [4Fe-4S] cluster. Mn(2+) contacts are provided by D65 and E78. [4Fe-4S] cluster-binding residues include C168, C171, and C177. Residues 204-541 (TLHVFGHDSR…ANIFAQARLR (338 aa)) form a CRISPR-associated endonuclease Cas1 region. E365, H433, and E448 together coordinate Mn(2+).

The protein in the N-terminal section; belongs to the CRISPR-associated exonuclease Cas4 family. It in the C-terminal section; belongs to the CRISPR-associated endonuclease Cas1 family. In terms of assembly, homodimer, forms a heterotetramer with a Cas2 homodimer. It depends on [4Fe-4S] cluster as a cofactor. Requires Mg(2+) as cofactor. Mn(2+) serves as cofactor.

It carries out the reaction exonucleolytic cleavage in the 5'- to 3'-direction to yield nucleoside 3'-phosphates.. Functionally, CRISPR (clustered regularly interspaced short palindromic repeat), is an adaptive immune system that provides protection against mobile genetic elements (viruses, transposable elements and conjugative plasmids). CRISPR clusters contain spacers, sequences complementary to antecedent mobile elements, and target invading nucleic acids. CRISPR clusters are transcribed and processed into CRISPR RNA (crRNA). The Cas4 region acts as a ssDNA exonuclease, while the Cas1 region acts as a dsDNA endonuclease. Involved in the integration of spacer DNA into the CRISPR cassette. This is CRISPR-associated exonuclease Cas4/endonuclease Cas1 fusion (cas4-cas1) from Leptospira interrogans serogroup Icterohaemorrhagiae serovar Lai (strain 56601).